The following is a 186-amino-acid chain: NADH-quinone oxidoreductase subunit I (186 aa).

4Fe-4S ferredoxin-type domains are found at residues leucine 70–alanine 100 and aspartate 113–aspartate 142. Positions 80, 83, 86, 90, 122, 125, 128, and 132 each coordinate [4Fe-4S] cluster.

The protein belongs to the complex I 23 kDa subunit family. NDH-1 is composed of 14 different subunits. Subunits NuoA, H, J, K, L, M, N constitute the membrane sector of the complex. It depends on [4Fe-4S] cluster as a cofactor.

Its subcellular location is the cell inner membrane. The enzyme catalyses a quinone + NADH + 5 H(+)(in) = a quinol + NAD(+) + 4 H(+)(out). In terms of biological role, NDH-1 shuttles electrons from NADH, via FMN and iron-sulfur (Fe-S) centers, to quinones in the respiratory chain. The immediate electron acceptor for the enzyme in this species is believed to be ubiquinone. Couples the redox reaction to proton translocation (for every two electrons transferred, four hydrogen ions are translocated across the cytoplasmic membrane), and thus conserves the redox energy in a proton gradient. This is NADH-quinone oxidoreductase subunit I from Pelobacter propionicus (strain DSM 2379 / NBRC 103807 / OttBd1).